The sequence spans 586 residues: Alpha-1,2-mannosyltransferase MNN5 (586 aa).

The signal sequence occupies residues 1–29 (MLIRLKKRKILQVIVSAVVLILFFCSVHN). 4 N-linked (GlcNAc...) asparagine glycosylation sites follow: asparagine 113, asparagine 136, asparagine 259, and asparagine 264.

It belongs to the MNN1/MNT family. Interacts with SVP26. In terms of processing, glycosylated.

The protein resides in the golgi apparatus. It is found in the cis-Golgi network. It functions in the pathway protein modification; protein glycosylation. Responsible for addition of first and second mannose residues to the outer chain of core N-linked polysaccharides and to O-linked mannotriose. Implicated in late Golgi modifications. The sequence is that of Alpha-1,2-mannosyltransferase MNN5 (MNN5) from Saccharomyces cerevisiae (strain ATCC 204508 / S288c) (Baker's yeast).